The following is a 469-amino-acid chain: Ribulose bisphosphate carboxylase large chain (469 aa).

K8 is subject to N6,N6,N6-trimethyllysine. Residues N117 and T167 each contribute to the substrate site. The active-site Proton acceptor is K169. K171 provides a ligand contact to substrate. K195, D197, and E198 together coordinate Mg(2+). K195 is subject to N6-carboxylysine. H288 serves as the catalytic Proton acceptor. Positions 289, 321, and 373 each coordinate substrate.

Belongs to the RuBisCO large chain family. Type I subfamily. Heterohexadecamer of 8 large chains and 8 small chains; disulfide-linked. The disulfide link is formed within the large subunit homodimers. Requires Mg(2+) as cofactor. Post-translationally, the disulfide bond which can form in the large chain dimeric partners within the hexadecamer appears to be associated with oxidative stress and protein turnover.

The protein localises to the plastid. It is found in the chloroplast. It carries out the reaction 2 (2R)-3-phosphoglycerate + 2 H(+) = D-ribulose 1,5-bisphosphate + CO2 + H2O. The enzyme catalyses D-ribulose 1,5-bisphosphate + O2 = 2-phosphoglycolate + (2R)-3-phosphoglycerate + 2 H(+). Functionally, ruBisCO catalyzes two reactions: the carboxylation of D-ribulose 1,5-bisphosphate, the primary event in carbon dioxide fixation, as well as the oxidative fragmentation of the pentose substrate in the photorespiration process. Both reactions occur simultaneously and in competition at the same active site. This Coleonema pulchellum (Confetti bush) protein is Ribulose bisphosphate carboxylase large chain.